We begin with the raw amino-acid sequence, 1025 residues long: Exportin-T (1025 aa).

It belongs to the exportin family.

Its subcellular location is the nucleus. The protein localises to the cytoplasm. Functionally, tRNA nucleus export receptor which facilitates tRNA translocation across the nuclear pore complex. Involved in pre-tRNA splicing, probably by affecting the interaction of pre-tRNA with splicing endonuclease. This Yarrowia lipolytica (strain CLIB 122 / E 150) (Yeast) protein is Exportin-T (LOS1).